A 102-amino-acid polypeptide reads, in one-letter code: Transposable element activator uncharacterized 12 kDa protein (102 aa).

Basic residues predominate over residues 24-51 (HNHNQNHNHSHNLNPKKKHHRRGQRSAH). The disordered stretch occupies residues 24 to 55 (HNHNQNHNHSHNLNPKKKHHRRGQRSAHRMYG).

This chain is Transposable element activator uncharacterized 12 kDa protein, found in Zea mays (Maize).